The following is a 165-amino-acid chain: Peptide deformylase (165 aa).

Positions 93 and 135 each coordinate Fe cation. The active site involves Glu-136. Residue His-139 participates in Fe cation binding.

The protein belongs to the polypeptide deformylase family. Requires Fe(2+) as cofactor.

It catalyses the reaction N-terminal N-formyl-L-methionyl-[peptide] + H2O = N-terminal L-methionyl-[peptide] + formate. Its function is as follows. Removes the formyl group from the N-terminal Met of newly synthesized proteins. Requires at least a dipeptide for an efficient rate of reaction. N-terminal L-methionine is a prerequisite for activity but the enzyme has broad specificity at other positions. This is Peptide deformylase from Thermodesulfovibrio yellowstonii (strain ATCC 51303 / DSM 11347 / YP87).